The sequence spans 163 residues: MPSFDIVSEITLHEVRNAVENANRVLTTRYDFRGVEAIIELNEKNESIKLTTESEFQLEQLIEMLISACVKRGIEHSSLDIPTDAEHHGKLYSKEIKLKQGIETEIAKKITKLIKDAKIKVQTQIQGDQVRVTGKSRDDLQATIQLIKTAELGQPFQFNNFRD.

Belongs to the YajQ family.

Functionally, nucleotide-binding protein. The chain is Nucleotide-binding protein HD_0358 from Haemophilus ducreyi (strain 35000HP / ATCC 700724).